A 413-amino-acid chain; its full sequence is Prophage integrase IntA (413 aa).

The 82-residue stretch at 105–186 folds into the Core-binding (CB) domain; sequence NTFLLVAERW…RINEVMIYAQ (82 aa). Positions 209-386 constitute a Tyr recombinase domain; the sequence is KNMPSIRPDQ…DYLEQRRPMM (178 aa). Residues Arg-248, Lys-275, His-337, Arg-340, and His-363 contribute to the active site. Tyr-373 serves as the catalytic O-(3'-phospho-DNA)-tyrosine intermediate.

It belongs to the 'phage' integrase family.

Its function is as follows. Integrase is necessary for integration of the phage into the host genome by site-specific recombination. In conjunction with excisionase, integrase is also necessary for excision of the prophage from the host genome. Part of the cryptic P4-like prophage CP4-57, it excises the prophage when overexpressed, which also requires integration host factor (encoded by ihfA and ihfB). Overexpression of AlpA leads to excision of the CP4-57 prophage, which inactivates ssrA (the gene upstream of the prophage) that encodes tmRNA which is required to rescue stalled ribosomes in a process known as trans-translation. The protein is Prophage integrase IntA (intA) of Escherichia coli (strain K12).